The chain runs to 452 residues: Phosphoglucosamine mutase (452 aa).

Residue serine 104 is the Phosphoserine intermediate of the active site. Mg(2+)-binding residues include serine 104, aspartate 246, aspartate 248, and aspartate 250. The residue at position 104 (serine 104) is a Phosphoserine.

It belongs to the phosphohexose mutase family. Mg(2+) serves as cofactor. In terms of processing, activated by phosphorylation.

The catalysed reaction is alpha-D-glucosamine 1-phosphate = D-glucosamine 6-phosphate. In terms of biological role, catalyzes the conversion of glucosamine-6-phosphate to glucosamine-1-phosphate. In Streptomyces griseus subsp. griseus (strain JCM 4626 / CBS 651.72 / NBRC 13350 / KCC S-0626 / ISP 5235), this protein is Phosphoglucosamine mutase.